We begin with the raw amino-acid sequence, 781 residues long: Catenin beta-1 (781 aa).

Residue A2 is modified to N-acetylalanine. An interaction with VCL region spans residues 2–23; sequence ATQADLMELDMAMEPDRKAAVS. Position 23 is a phosphoserine; by GSK3-beta; alternate (S23). O-linked (GlcNAc) serine; alternate glycosylation occurs at S23. The residue at position 29 (S29) is a Phosphoserine; by GSK3-beta. Phosphoserine; by GSK3-beta and HIPK2 is present on residues S33 and S37. The tract at residues 34-57 is disordered; sequence GIHSGATTTAPSLSGKGNPEEEDV. A Phosphothreonine; by GSK3-beta modification is found at T41. At S45 the chain carries Phosphoserine. The residue at position 49 (K49) is an N6-acetyllysine. Y64 bears the Phosphotyrosine; by PTK6 mark. Position 142 is a phosphotyrosine; by FYN and PTK6 (Y142). ARM repeat units follow at residues 151-191, 193-234, 235-276, 277-318, 319-360, 361-389, 400-441, 442-484, 489-530, 531-571, 594-636, and 637-666; these read RAIP…IMRS, QMVS…IFKS, GGIP…VRLA, GGLQ…ILAS, GGPQ…IVEA, GGMQ…RNLS, GLLG…VCQV, GGIE…AQNA, YGLP…LREQ, GAIP…EIVE, NTIP…AEGA, and TAPL…SEDK. The interval 156–178 is interaction with BCL9; that stretch reads LTKLLNDEDQVVVNKAAVMVHQL. S191 is subject to Phosphoserine. S246 carries the phosphoserine; by CDK5 modification. 2 positions are modified to phosphotyrosine: Y331 and Y333. S552 carries the post-translational modification Phosphoserine; by AMPK. Position 556 is a phosphothreonine (T556). C619 is modified (S-nitrosocysteine). S675 is modified (phosphoserine). Residues 720–781 are disordered; that stretch reads HSGGYGQDAL…NQLAWFDTDL (62 aa). The span at 734-745 shows a compositional bias: basic and acidic residues; it reads MMEHEMGGHHPG. The segment at 772 to 781 is interaction with SCRIB; that stretch reads NQLAWFDTDL.

The protein belongs to the beta-catenin family. As to quaternary structure, two separate complex-associated pools are found in the cytoplasm. The majority is present as component of an E-cadherin/ catenin adhesion complex composed of at least E-cadherin/CDH1 and beta-catenin/CTNNB1, and possibly alpha-catenin/CTNNA1; the complex is located to adherens junctions. The stable association of CTNNA1 is controversial as CTNNA1 was shown not to bind to F-actin when assembled in the complex. Alternatively, the CTNNA1-containing complex may be linked to F-actin by other proteins such as LIMA1. Binds NHERF1. Interacts with PTPRU (via the cytoplasmic juxtamembrane domain) and with EMD. Interacts with SESTD1 and TRPC4. Interacts with CAV1. Interacts with PTPRJ. Interacts with PKT7. Interacts with FAT1 (via the cytoplasmic domain). Interacts with CDK2, NDRG2 and NANOS1. Interacts with NEK2 and CDK5. Interacts with CARM1, CXADR, PCDH11Y and PTK6. Interacts with RAPGEF2. Interacts with SOX7; this interaction may lead to proteasomal degradation of active CTNNB1 and thus inhibition of Wnt/beta-catenin-stimulated transcription. Identified in a complex with HINT1 and MITF. Interacts with FHIT. Interacts with FERMT2. Identified in a complex with TCF4 and FERMT2. Another cytoplasmic pool is part of a large complex containing AXIN1, AXIN2, APC, CSNK1A1 and GSK3B that promotes phosphorylation on N-terminal Ser and Thr residues and ubiquitination of CTNNB1 via BTRC and its subsequent degradation by the proteasome. Wnt-dependent activation of DVL antagonizes the action of GSK3B. When GSK3B activity is inhibited the complex dissociates, CTNNB1 is dephosphorylated and is no longer targeted for destruction. The stabilized protein translocates to the nucleus, where it binds TCF/LEF-1 family members, BCL9, BCL9L and possibly also RUVBL1 and CHD8. Interacts with TAX1BP3 (via the PDZ domain); this interaction inhibits the transcriptional activity of CTNNB1. Interacts with AJAP1, BAIAP1 and CTNNA3. Interacts with TRPV4; the TRPV4 and CTNNB1 complex can interact with CDH1. Interacts with VCL. The CTNNB1 and TCF4 complex interacts with PML. Interacts with XIRP1. Binds CTNNBIP and EP300. CTNNB1 forms a ternary complex with LEF1 and EP300 that is disrupted by CTNNBIP1 binding. Interacts directly with AXIN1; the interaction is regulated by CDK2 phosphorylation of AXIN1. Interacts with GLIS2. Interacts with SCRIB. Interacts with TNIK and TCF7L2. Interacts with SLC30A9. Interacts with RORA. May interact with P-cadherin/CDH3. Interacts with RNF220. Interacts with CTNND2. Interacts (via the C-terminal region) with CBY1. The complex composed, at least, of APC, CTNNB1 and GSK3B interacts with JPT1; the interaction requires the inactive form of GSK3B (phosphorylated at 'Ser-9'). Interacts with DLG5. Interacts with FAM53B; promoting translocation to the nucleus. Interacts with TMEM170B. Interacts with AHI1. Interacts with GID8. Component of an cadherin:catenin adhesion complex composed of at least of CDH26, beta-catenin/CTNNB1, alpha-catenin/CTNNA1 and p120 catenin/CTNND1. Forms a complex comprising APPL1, RUVBL2, APPL2, HDAC1 and HDAC2. Interacts with IRF2BPL; mediates the ubiquitination and degradation of CTNNB1. Interacts with AMFR. Interacts with LMBR1L. Interacts with SOX30; prevents interaction of CTNNB1 with TCF7L2/TCF4 and leads to inhibition of Wnt signaling. Interacts with SOX9; inhibiting CTNNB1 activity by competing with the binding sites of TCF/LEF within CTNNB1, thereby inhibiting the Wnt signaling. Interacts with SPN/CD43 cytoplasmic tail. Interacts (when phosphorylated at Tyr-333) with isoform M2 of PKM (PKM2); promoting transcription activation. Interacts with PKP2 (via HEAD domain). Interacts with CDH1. Interacts (when unphosphorylated) with FLYWCH1, perhaps preventing interaction of CTNNB1 with TCF4, and thereby regulating transcription activation; phosphorylation of CTNNB1 may inhibit the interaction. Interacts (via the central armadillo domains) with probable transcriptional regulator ADNP (via N-terminal region); interaction is direct and stabilizes CTNNB1 by modulating its phosphorylation by glycogen synthase kinase-3 beta GSK3B. Interacts with NR5A2. Interacts with DSG2; the interaction promotes localization of CTNNB1 at cell junctions thus reducing its nuclear localization and subsequent transcription of CTNNB1/TCF-target genes. Post-translationally, phosphorylation at Ser-552 by AMPK promotes stabilization of the protein, enhancing TCF/LEF-mediated transcription. Phosphorylation by GSK3B requires prior phosphorylation of Ser-45 by another kinase. Phosphorylation proceeds then from Thr-41 to Ser-37 and Ser-33. Phosphorylated by NEK2. EGF stimulates tyrosine phosphorylation. Phosphorylated on Ser-33 and Ser-37 by HIPK2 and GSK3B, this phosphorylation triggers proteasomal degradation. Phosphorylation on Ser-191 and Ser-246 by CDK5. Phosphorylation by CDK2 regulates insulin internalization. Phosphorylation by PTK6 at Tyr-64, Tyr-142, Tyr-331 and/or Tyr-333 with the predominant site at Tyr-64 is not essential for inhibition of transcriptional activity. Phosphorylation by SRC at Tyr-333 promotes interaction with isoform M2 of PKM (PKM2); promoting transcription activation. In terms of processing, ubiquitinated by the SCF(BTRC) E3 ligase complex when phosphorylated by GSK3B, leading to its degradation. Ubiquitinated by a E3 ubiquitin ligase complex containing UBE2D1, SIAH1, CACYBP/SIP, SKP1, APC and TBL1X, leading to its subsequent proteasomal degradation. Ubiquitinated and degraded following interaction with SOX9. Ubiquitinated via 'Lys-11'- and 'Lys-29'-linked ubiquitin chains by UBR5, leading to its stabilization. S-nitrosylation at Cys-619 within adherens junctions promotes VEGF-induced, NO-dependent endothelial cell permeability by disrupting interaction with E-cadherin, thus mediating disassembly adherens junctions. Post-translationally, O-glycosylation at Ser-23 decreases nuclear localization and transcriptional activity, and increases localization to the plasma membrane and interaction with E-cadherin CDH1. In terms of processing, deacetylated at Lys-49 by SIRT1. In terms of tissue distribution, expressed in cerebellar granule neurons (at protein level). Expressed in the intestinal epithelium (at protein level). Abundantly expressed in the tooth, skin, lung, kidney, eye and brain with weak expression in the liver and heart.

It localises to the cytoplasm. The protein resides in the nucleus. It is found in the cytoskeleton. Its subcellular location is the cell junction. The protein localises to the adherens junction. It localises to the cell membrane. The protein resides in the microtubule organizing center. It is found in the centrosome. Its subcellular location is the spindle pole. The protein localises to the synapse. It localises to the cilium basal body. Functionally, key downstream component of the canonical Wnt signaling pathway. In the absence of Wnt, forms a complex with AXIN1, AXIN2, APC, CSNK1A1 and GSK3B that promotes phosphorylation on N-terminal Ser and Thr residues and ubiquitination of CTNNB1 via BTRC and its subsequent degradation by the proteasome. In the presence of Wnt ligand, CTNNB1 is not ubiquitinated and accumulates in the nucleus, where it acts as a coactivator for transcription factors of the TCF/LEF family, leading to activate Wnt responsive genes. Also acts as a coactivator for other transcription factors, such as NR5A2. Promotes epithelial to mesenchymal transition/mesenchymal to epithelial transition (EMT/MET) via driving transcription of CTNNB1/TCF-target genes. Involved in the regulation of cell adhesion, as component of an E-cadherin:catenin adhesion complex. Acts as a negative regulator of centrosome cohesion. Involved in the CDK2/PTPN6/CTNNB1/CEACAM1 pathway of insulin internalization. Blocks anoikis of malignant kidney and intestinal epithelial cells and promotes their anchorage-independent growth by down-regulating DAPK2. Disrupts PML function and PML-NB formation by inhibiting RANBP2-mediated sumoylation of PML. Promotes neurogenesis by maintaining sympathetic neuroblasts within the cell cycle. Involved in chondrocyte differentiation via interaction with SOX9: SOX9-binding competes with the binding sites of TCF/LEF within CTNNB1, thereby inhibiting the Wnt signaling. Acts as a positive regulator of odontoblast differentiation during mesenchymal tooth germ formation, via promoting the transcription of differentiation factors such as LEF1, BMP2 and BMP4. Activity is repressed in a MSX1-mediated manner at the bell stage of mesenchymal tooth germ formation which prevents premature differentiation of odontoblasts. The chain is Catenin beta-1 from Mus musculus (Mouse).